Consider the following 507-residue polypeptide: Ribonuclease Y (507 aa).

Residues 1 to 21 traverse the membrane as a helical segment; it reads MLWYIVAGAGGLLIGYLIANY. The KH domain occupies 197 to 282; that stretch reads TVSTVSLPSD…EMYEKAKQEV (86 aa). Residues 323–416 enclose the HD domain; sequence VLNHSIEVAL…VAAADALSAA (94 aa).

This sequence belongs to the RNase Y family.

The protein resides in the cell membrane. Its function is as follows. Endoribonuclease that initiates mRNA decay. The sequence is that of Ribonuclease Y from Thermotoga sp. (strain RQ2).